A 397-amino-acid chain; its full sequence is Serpin B10 (397 aa).

The interval 62 to 85 (RDQGVKSSPESEKKRKMEFNSSNS) is disordered. The span at 70 to 79 (PESEKKRKME) shows a compositional bias: basic and acidic residues. Residues 74–77 (KKRK) carry the Nuclear localization signal motif.

The protein belongs to the serpin family. Ov-serpin subfamily.

It localises to the nucleus. The protein resides in the cytoplasm. Functionally, protease inhibitor that may play a role in the regulation of protease activities during hematopoiesis and apoptosis induced by TNF. May regulate protease activities in the cytoplasm and in the nucleus. The chain is Serpin B10 (SERPINB10) from Papio anubis (Olive baboon).